The primary structure comprises 127 residues: Ycf91-like protein (127 aa).

It belongs to the ycf91 family.

The chain is Ycf91-like protein from Nostoc sp. (strain PCC 7120 / SAG 25.82 / UTEX 2576).